We begin with the raw amino-acid sequence, 103 residues long: Small ribosomal subunit protein uS10 (103 aa).

This sequence belongs to the universal ribosomal protein uS10 family. As to quaternary structure, part of the 30S ribosomal subunit.

Functionally, involved in the binding of tRNA to the ribosomes. The chain is Small ribosomal subunit protein uS10 from Neisseria gonorrhoeae (strain ATCC 700825 / FA 1090).